Here is a 109-residue protein sequence, read N- to C-terminus: Putative transposase MJ0856.1 (109 aa).

Zn(2+)-binding residues include cysteine 36, cysteine 39, cysteine 62, and cysteine 65.

The protein belongs to the transposase 35 family.

The chain is Putative transposase MJ0856.1 from Methanocaldococcus jannaschii (strain ATCC 43067 / DSM 2661 / JAL-1 / JCM 10045 / NBRC 100440) (Methanococcus jannaschii).